A 356-amino-acid chain; its full sequence is Dual-specificity RNA methyltransferase RlmN (356 aa).

The active-site Proton acceptor is the Glu89. Positions 108-341 constitute a Radical SAM core domain; that stretch reads KHARYTICVS…CTIRESKGLD (234 aa). Cys115 and Cys346 are disulfide-bonded. 3 residues coordinate [4Fe-4S] cluster: Cys122, Cys126, and Cys129. Residues 172–173, Ser204, 227–229, and Asn303 contribute to the S-adenosyl-L-methionine site; these read GE and SLH. The active-site S-methylcysteine intermediate is Cys346.

The protein belongs to the radical SAM superfamily. RlmN family. [4Fe-4S] cluster is required as a cofactor.

The protein localises to the cytoplasm. The enzyme catalyses adenosine(2503) in 23S rRNA + 2 reduced [2Fe-2S]-[ferredoxin] + 2 S-adenosyl-L-methionine = 2-methyladenosine(2503) in 23S rRNA + 5'-deoxyadenosine + L-methionine + 2 oxidized [2Fe-2S]-[ferredoxin] + S-adenosyl-L-homocysteine. The catalysed reaction is adenosine(37) in tRNA + 2 reduced [2Fe-2S]-[ferredoxin] + 2 S-adenosyl-L-methionine = 2-methyladenosine(37) in tRNA + 5'-deoxyadenosine + L-methionine + 2 oxidized [2Fe-2S]-[ferredoxin] + S-adenosyl-L-homocysteine. Its function is as follows. Specifically methylates position 2 of adenine 2503 in 23S rRNA and position 2 of adenine 37 in tRNAs. m2A2503 modification seems to play a crucial role in the proofreading step occurring at the peptidyl transferase center and thus would serve to optimize ribosomal fidelity. This chain is Dual-specificity RNA methyltransferase RlmN, found in Campylobacter lari (strain RM2100 / D67 / ATCC BAA-1060).